The chain runs to 426 residues: Enolase (426 aa).

Glutamine 163 lines the (2R)-2-phosphoglycerate pocket. Catalysis depends on glutamate 205, which acts as the Proton donor. Residues aspartate 242, glutamate 283, and aspartate 310 each contribute to the Mg(2+) site. Residues lysine 335, arginine 364, serine 365, and lysine 386 each coordinate (2R)-2-phosphoglycerate. Catalysis depends on lysine 335, which acts as the Proton acceptor.

The protein belongs to the enolase family. Mg(2+) serves as cofactor.

It localises to the cytoplasm. The protein resides in the secreted. Its subcellular location is the cell surface. The enzyme catalyses (2R)-2-phosphoglycerate = phosphoenolpyruvate + H2O. It functions in the pathway carbohydrate degradation; glycolysis; pyruvate from D-glyceraldehyde 3-phosphate: step 4/5. In terms of biological role, catalyzes the reversible conversion of 2-phosphoglycerate (2-PG) into phosphoenolpyruvate (PEP). It is essential for the degradation of carbohydrates via glycolysis. The sequence is that of Enolase from Leifsonia xyli subsp. xyli (strain CTCB07).